Here is a 310-residue protein sequence, read N- to C-terminus: ADP-L-glycero-D-manno-heptose-6-epimerase (310 aa).

NADP(+) is bound by residues 10 to 11 (LI), 31 to 32 (DN), lysine 38, lysine 53, 75 to 79 (EGACS), and asparagine 92. Tyrosine 140 (proton acceptor) is an active-site residue. Lysine 144 is an NADP(+) binding site. Residue asparagine 169 participates in substrate binding. 2 residues coordinate NADP(+): valine 170 and lysine 178. Catalysis depends on lysine 178, which acts as the Proton acceptor. Substrate-binding positions include serine 180, histidine 187, 201–204 (FAGS), arginine 209, and tyrosine 272.

It belongs to the NAD(P)-dependent epimerase/dehydratase family. HldD subfamily. In terms of assembly, homopentamer. Requires NADP(+) as cofactor.

The catalysed reaction is ADP-D-glycero-beta-D-manno-heptose = ADP-L-glycero-beta-D-manno-heptose. It functions in the pathway nucleotide-sugar biosynthesis; ADP-L-glycero-beta-D-manno-heptose biosynthesis; ADP-L-glycero-beta-D-manno-heptose from D-glycero-beta-D-manno-heptose 7-phosphate: step 4/4. Functionally, catalyzes the interconversion between ADP-D-glycero-beta-D-manno-heptose and ADP-L-glycero-beta-D-manno-heptose via an epimerization at carbon 6 of the heptose. This is ADP-L-glycero-D-manno-heptose-6-epimerase from Erwinia tasmaniensis (strain DSM 17950 / CFBP 7177 / CIP 109463 / NCPPB 4357 / Et1/99).